A 294-amino-acid chain; its full sequence is MKFAKGHGTENDFVLLCDPPAELRLTGAGVAALCDRRRGLGADGVLRVTAAAAAAAAGVLDRLPDGVAGDDWYMDYRNADGSVAQMCGNGVRVFAHYLRASGLETRDEFVVGSLAGPRPVTVHAADATGADVSVDMGKANTLGGGGEAFEATVGGRRFAGLAVDVGNPHLACLDPELSVDELAALDVAAPVSFDAAQFPDGVNIEVLTAPAAGVVHMRVHERGVGETRSCGTGTVAAVVAALAAAGADTGTLTVRVPGGDVVVTVTDATSYLRGPSVLVAHGEISEEWWQQAQR.

Substrate-binding residues include N11 and N78. C87 functions as the Proton donor in the catalytic mechanism. Residues 88 to 89 (GN), N167, N203, and 221 to 222 (ER) contribute to the substrate site. The active-site Proton acceptor is C230. Substrate is bound at residue 231–232 (GT).

It belongs to the diaminopimelate epimerase family. As to quaternary structure, homodimer.

The protein resides in the cytoplasm. It carries out the reaction (2S,6S)-2,6-diaminopimelate = meso-2,6-diaminopimelate. Its pathway is amino-acid biosynthesis; L-lysine biosynthesis via DAP pathway; DL-2,6-diaminopimelate from LL-2,6-diaminopimelate: step 1/1. Its function is as follows. Catalyzes the stereoinversion of LL-2,6-diaminopimelate (L,L-DAP) to meso-diaminopimelate (meso-DAP), a precursor of L-lysine and an essential component of the bacterial peptidoglycan. The polypeptide is Diaminopimelate epimerase (Mycolicibacterium paratuberculosis (strain ATCC BAA-968 / K-10) (Mycobacterium paratuberculosis)).